A 335-amino-acid polypeptide reads, in one-letter code: Holliday junction branch migration complex subunit RuvB (335 aa).

The tract at residues 1 to 183 (MDERIISSET…FGVIDHLEFY (183 aa)) is large ATPase domain (RuvB-L). ATP contacts are provided by residues Leu22, Arg23, Gly64, Lys67, Thr68, Thr69, 130–132 (EDY), Arg173, Tyr183, and Arg220. Thr68 is a binding site for Mg(2+). The segment at 184-254 (TEEQLTEIVL…LAKEALTLLQ (71 aa)) is small ATPAse domain (RuvB-S). Positions 257–335 (PRGLDTIDQK…HLGISYEKEV (79 aa)) are head domain (RuvB-H). DNA-binding residues include Arg293, Arg312, and Arg317.

This sequence belongs to the RuvB family. In terms of assembly, homohexamer. Forms an RuvA(8)-RuvB(12)-Holliday junction (HJ) complex. HJ DNA is sandwiched between 2 RuvA tetramers; dsDNA enters through RuvA and exits via RuvB. An RuvB hexamer assembles on each DNA strand where it exits the tetramer. Each RuvB hexamer is contacted by two RuvA subunits (via domain III) on 2 adjacent RuvB subunits; this complex drives branch migration. In the full resolvosome a probable DNA-RuvA(4)-RuvB(12)-RuvC(2) complex forms which resolves the HJ.

Its subcellular location is the cytoplasm. It carries out the reaction ATP + H2O = ADP + phosphate + H(+). The RuvA-RuvB-RuvC complex processes Holliday junction (HJ) DNA during genetic recombination and DNA repair, while the RuvA-RuvB complex plays an important role in the rescue of blocked DNA replication forks via replication fork reversal (RFR). RuvA specifically binds to HJ cruciform DNA, conferring on it an open structure. The RuvB hexamer acts as an ATP-dependent pump, pulling dsDNA into and through the RuvAB complex. RuvB forms 2 homohexamers on either side of HJ DNA bound by 1 or 2 RuvA tetramers; 4 subunits per hexamer contact DNA at a time. Coordinated motions by a converter formed by DNA-disengaged RuvB subunits stimulates ATP hydrolysis and nucleotide exchange. Immobilization of the converter enables RuvB to convert the ATP-contained energy into a lever motion, pulling 2 nucleotides of DNA out of the RuvA tetramer per ATP hydrolyzed, thus driving DNA branch migration. The RuvB motors rotate together with the DNA substrate, which together with the progressing nucleotide cycle form the mechanistic basis for DNA recombination by continuous HJ branch migration. Branch migration allows RuvC to scan DNA until it finds its consensus sequence, where it cleaves and resolves cruciform DNA. The sequence is that of Holliday junction branch migration complex subunit RuvB from Listeria monocytogenes serovar 1/2a (strain ATCC BAA-679 / EGD-e).